A 259-amino-acid chain; its full sequence is (3R)-3-hydroxyacyl-CoA dehydrogenase (259 aa).

NAD(+)-binding positions include 13–21 (LVTGAGSGI) and 40–41 (DL). The residue at position 58 (serine 58) is a Phosphoserine. Lysine 66 carries the post-translational modification N6-acetyllysine. 72–74 (ADV) contributes to the NAD(+) binding site. Serine 154 is a substrate binding site. N6-succinyllysine is present on lysine 158. Residue tyrosine 167 is the Proton acceptor of the active site. NAD(+) contacts are provided by residues 167 to 171 (YASSK) and 200 to 202 (IAT). Lysine 171 carries the post-translational modification N6-succinyllysine.

It belongs to the short-chain dehydrogenases/reductases (SDR) family. As to quaternary structure, heterotetramer with CBR4; contains two molecules of HSD17B8 and CBR4. In terms of tissue distribution, expressed in ovary at protein level.

It localises to the mitochondrion matrix. The catalysed reaction is a (3R)-3-hydroxyacyl-CoA + NAD(+) = a 3-oxoacyl-CoA + NADH + H(+). It carries out the reaction 17beta-estradiol + NAD(+) = estrone + NADH + H(+). The enzyme catalyses testosterone + NAD(+) = androst-4-ene-3,17-dione + NADH + H(+). It catalyses the reaction 17beta-hydroxy-5alpha-androstan-3-one + NAD(+) = 5alpha-androstan-3,17-dione + NADH + H(+). It functions in the pathway steroid biosynthesis; estrogen biosynthesis. Its pathway is lipid metabolism; fatty acid biosynthesis. The protein operates within lipid metabolism; mitochondrial fatty acid beta-oxidation. Functionally, required for the solubility and assembly of the heterotetramer 3-ketoacyl-[acyl carrier protein] (ACP) reductase functional complex (KAR or KAR1) that forms part of the mitochondrial fatty acid synthase (mtFAS). Alpha-subunit of the KAR complex that acts as scaffold protein required for the stability of carbonyl reductase type-4 (CBR4, beta-subunit of the KAR complex) and for its 3-ketoacyl-ACP reductase activity, thereby participating in mitochondrial fatty acid biosynthesis. Catalyzes the NAD-dependent conversion of (3R)-3-hydroxyacyl-CoA into 3-ketoacyl-CoA (3-oxoacyl-CoA) with no chain length preference; this enzymatic activity is not needed for the KAR function. Prefers (3R)-3-hydroxyacyl-CoA over (3S)-3-hydroxyacyl-CoA and displays enzymatic activity only in the presence of NAD(+). Cooperates with enoyl-CoA hydratase 1 in mitochondria, together they constitute an alternative route to the auxiliary enzyme pathways for the breakdown of Z-PUFA (cis polyunsaturated fatty acid) enoyl-esters. NAD-dependent 17-beta-hydroxysteroid dehydrogenase with highest activity towards estradiol (17beta-estradiol or E2). Has very low activity towards testosterone and dihydrotestosterone (17beta-hydroxy-5alpha-androstan-3-one). Primarily an oxidative enzyme, it can switch to a reductive mode determined in the appropriate physiologic milieu and catalyze the reduction of estrone (E1) to form biologically active 17beta-estradiol. In Rattus norvegicus (Rat), this protein is (3R)-3-hydroxyacyl-CoA dehydrogenase (Hsd17b8).